Reading from the N-terminus, the 343-residue chain is Methylthioribose-1-phosphate isomerase (343 aa).

Residues 48–50 (RGA), R88, and Q193 contribute to the substrate site. The Proton donor role is filled by D234. 244 to 245 (NK) serves as a coordination point for substrate.

The protein belongs to the eIF-2B alpha/beta/delta subunits family. MtnA subfamily.

The catalysed reaction is 5-(methylsulfanyl)-alpha-D-ribose 1-phosphate = 5-(methylsulfanyl)-D-ribulose 1-phosphate. The protein operates within amino-acid biosynthesis; L-methionine biosynthesis via salvage pathway; L-methionine from S-methyl-5-thio-alpha-D-ribose 1-phosphate: step 1/6. Functionally, catalyzes the interconversion of methylthioribose-1-phosphate (MTR-1-P) into methylthioribulose-1-phosphate (MTRu-1-P). This is Methylthioribose-1-phosphate isomerase from Thermotoga neapolitana (strain ATCC 49049 / DSM 4359 / NBRC 107923 / NS-E).